The chain runs to 511 residues: Bifunctional purine biosynthesis protein PurH (511 aa).

Residues 1-147 (MIQIKRALIS…KNYKHTLVLT (147 aa)) form the MGS-like domain.

Belongs to the PurH family.

It catalyses the reaction (6R)-10-formyltetrahydrofolate + 5-amino-1-(5-phospho-beta-D-ribosyl)imidazole-4-carboxamide = 5-formamido-1-(5-phospho-D-ribosyl)imidazole-4-carboxamide + (6S)-5,6,7,8-tetrahydrofolate. The enzyme catalyses IMP + H2O = 5-formamido-1-(5-phospho-D-ribosyl)imidazole-4-carboxamide. It participates in purine metabolism; IMP biosynthesis via de novo pathway; 5-formamido-1-(5-phospho-D-ribosyl)imidazole-4-carboxamide from 5-amino-1-(5-phospho-D-ribosyl)imidazole-4-carboxamide (10-formyl THF route): step 1/1. Its pathway is purine metabolism; IMP biosynthesis via de novo pathway; IMP from 5-formamido-1-(5-phospho-D-ribosyl)imidazole-4-carboxamide: step 1/1. The polypeptide is Bifunctional purine biosynthesis protein PurH (Leptospira borgpetersenii serovar Hardjo-bovis (strain JB197)).